A 1200-amino-acid chain; its full sequence is Metabotropic glycine receptor (1200 aa).

A signal peptide spans 1–24 (MGAMAYSLLFCLLLAHLGLGEVGA). A disordered region spans residues 25 to 62 (SLDPPGRPDSPRERTPRGKQHGQQLPRASAPDPSIPWS). Over 25-417 (SLDPPGRPDS…CFVQEDKYLR (393 aa)) the chain is Extracellular. The segment at 85–281 (YLYTGDFHQL…CENGSYKPGW (197 aa)) is cache-like region. N-linked (GlcNAc...) asparagine glycosylation is found at Asn98 and Asn143. The cysteines at positions 99 and 272 are disulfide-linked. Glycine contacts are provided by Ser172 and Arg173. Residue Asn215 is glycosylated (N-linked (GlcNAc...) asparagine). Residues 234–253 (LHRRGSNQGPRGLGHSWRRR) are disordered. Position 271 (Glu271) interacts with glycine. Residue Asn274 is glycosylated (N-linked (GlcNAc...) asparagine). A glycine-binding site is contributed by Asp307. Residue Asn333 is glycosylated (N-linked (GlcNAc...) asparagine). A helical membrane pass occupies residues 418–439 (LAIISFQALCMLLDFVSMLVVY). Residues 440 to 451 (HFRKAKSIRASG) are Cytoplasmic-facing. The helical transmembrane segment at 452–474 (LILLETILFGSLLLYFPVVILYF) threads the bilayer. Residues 475-478 (EPST) lie on the Extracellular side of the membrane. The helical transmembrane segment at 479–501 (FRCILLRWARLLGFATVYGTVTL) threads the bilayer. Cys481 and Cys573 are disulfide-bonded. Over 502 to 525 (KLHRVLKVFLSRTAQRIPYMTGGR) the chain is Cytoplasmic. Residues 526-547 (VMRMLAVIVLVVFWFLVGWTSS) form a helical membrane-spanning segment. Residues 548 to 576 (MCQNLERDILLVGQGQTSDHLTFNMCLID) are Extracellular-facing. Residues 577–597 (RWDYMTAVAEFLFLLWGIYLC) traverse the membrane as a helical segment. Residues 598–611 (YAVRTVPSAFHEPR) lie on the Cytoplasmic side of the membrane. The chain crosses the membrane as a helical span at residues 612–633 (YMAVAVHNELIITAIFHTIRFV). At 634–642 (LASRLQPDW) the chain is on the extracellular side. Residues 643 to 664 (MLMLYFAHAHLTVTVTIGLLLI) form a helical membrane-spanning segment. At 665-1200 (PKFSHSSNNP…SANKIPGPQK (536 aa)) the chain is on the cytoplasmic side. A phosphoserine mark is found at Ser694, Ser705, and Ser708. The tract at residues 757-875 (RITEIPETVS…EAESTESVPL (119 aa)) is disordered. 2 stretches are compositionally biased toward basic and acidic residues: residues 769–781 (CSKE…DHSA) and 819–828 (STYDHVRDQT). Lys774 is covalently cross-linked (Glycyl lysine isopeptide (Lys-Gly) (interchain with G-Cter in ubiquitin)). Residues 845 to 856 (ENSTLESLSSKK) are compositionally biased toward low complexity. Phosphoserine occurs at positions 865 and 944. A disordered region spans residues 947–988 (DNVETIPNSGHMEEPRKPQKSGIMKQQRVSLPTANPDVSSGI). Positions 973–988 (QRVSLPTANPDVSSGI) are enriched in polar residues. The short motif at 1000-1004 (VCPWE) is the VCPWE motif 1 element. The residue at position 1059 (Ser1059) is a Phosphoserine. The short motif at 1065–1069 (VCPWE) is the VCPWE motif 2 element. Phosphoserine is present on Ser1074. A disordered region spans residues 1130-1160 (QMGDQEKQTSSSVDIIPGSCNSSNNSHQPLT). Positions 1165–1169 (VCPWE) match the VCPWE motif 3 motif. Residues 1177-1200 (NAERSVTLPASSALSANKIPGPQK) form a disordered region. A compositionally biased stretch (polar residues) spans 1178 to 1191 (AERSVTLPASSALS).

The protein belongs to the G-protein coupled receptor 3 family. In terms of assembly, homodimer. Associates with the RGS7-GNB5 complex, promoting its localization to the cell membrane and regulating its GTPase activator activity. Interacts (via VCPWE motifs) with GNAO1. Interacts with GPC4. Interacts with EGFLAM. In terms of tissue distribution, highly expressed in brain. Expressed in several brain regions including the cerebral cortex, hippocampus, cerebellum and caudate putamen. Only expressed in neurons, and not in microglia, oligodendrocytes or astrocytes. Expressed in the visual center of the cerebral cortex. Also expressed in the eye, including photoreceptors, ganglion cells and trabecular meshwork.

The protein resides in the cell membrane. It is found in the postsynaptic cell membrane. Its subcellular location is the presynaptic cell membrane. It localises to the nucleus. Its function is as follows. Metabotropic receptor for glycine that controls synapse formation and function in the brain. Acts as an atypical G-protein coupled receptor that recruits and regulates the RGS7-GNB5 complex instead of activating G proteins. In absence of glycine ligand, promotes the GTPase activator activity of RGS7, increasing the GTPase activity of G protein alpha subunits, thereby driving them into their inactive GDP-bound form. Glycine-binding changes the conformation of the intracellular surface, inhibiting the GTPase activator activity of the RGS7-GNB5 complex, promoting G protein alpha subunits into their active GTP-bound form and regulating cAMP levels. Also able to bind taurine, a compound closely related to glycine, but with a two-fold lower affinity. Glycine receptor-dependent regulation of cAMP controls key ion channels, kinases and neurotrophic factors involved in neuronal excitability and synaptic transmission. Plays a pivotal role in regulating mood and cognition via its ability to regulate neuronal excitability in L2/L3 pyramidal neurons of the prefrontal cortex. Also involved in spatial learning by regulating hippocampal CA1 neuronal excitability. Acts as a synaptic organizer in the hippocampus, required for proper mossy fiber-CA3 neurocircuitry establishment, structure and function: induces presynaptic differentiation in contacting axons via its interaction with GPC4. In addition to glycine, may also act as a receptor for osteocalcin (Bglap or Bglap2) hormone: osteocalcin-binding initiates a signaling response that prevents neuronal apoptosis in the hippocampus and regulates the synthesis of neurotransmitters. The sequence is that of Metabotropic glycine receptor from Mus musculus (Mouse).